The chain runs to 767 residues: Start control protein cdc10 (767 aa).

Residues 17 to 44 are disordered; that stretch reads FSYQKRPEDEPSQPLSNRNINKLNDSST. The segment covering 29 to 44 has biased composition (polar residues); the sequence is QPLSNRNINKLNDSST. Residues 66-173 form the HTH APSES-type domain; the sequence is ELYAVECSGM…FNLDLFPKFS (108 aa). A DNA-binding region (H-T-H motif) is located at residues 98 to 119; that stretch reads ISQILRLAGTSSSENAKELDDI. Residues 189–230 are disordered; the sequence is TSSFNTRSPLRNHNFSNPSKSSKNGVHTINNMQSSPSPSSSF. A compositionally biased stretch (polar residues) spans 192–221; the sequence is FNTRSPLRNHNFSNPSKSSKNGVHTINNMQ. Phosphoserine is present on Ser252. The Nuclear localization signal motif lies at 261–264; it reads KRHR. 2 ANK repeats span residues 356-385 and 483-512; these read LGHA…NPLR and NGDT…SAYI. Residues 542-562 form a disordered region; sequence VSLMSENLSSKEKTAVPPRQK.

In terms of assembly, DSC1 contains cdc10 and sct1/res1. Interacts with pol5.

It is found in the nucleus. Functionally, major component of the cell cycle transcription factor complex MBF (MCB binding factor, also known as DSC1), that controls G1-S phase specific gene expression. Involved in the control of rRNA production, via interaction with pol5. May be involved in the transcriptional regulation of the cdc22 and cdt1 genes. In fission yeast, two genes, cdc10 and cdc2, are required for the cell cycle control called start, the point early in the G1 phase at which cells become committed to the mitotic cycle. This chain is Start control protein cdc10 (cdc10), found in Schizosaccharomyces pombe (strain 972 / ATCC 24843) (Fission yeast).